We begin with the raw amino-acid sequence, 139 residues long: Putative pre-16S rRNA nuclease (139 aa).

It belongs to the YqgF nuclease family.

The protein localises to the cytoplasm. In terms of biological role, could be a nuclease involved in processing of the 5'-end of pre-16S rRNA. This Legionella pneumophila (strain Paris) protein is Putative pre-16S rRNA nuclease.